Consider the following 128-residue polypeptide: Ribosome-binding factor A (128 aa).

This sequence belongs to the RbfA family. Monomer. Binds 30S ribosomal subunits, but not 50S ribosomal subunits or 70S ribosomes.

The protein localises to the cytoplasm. Its function is as follows. One of several proteins that assist in the late maturation steps of the functional core of the 30S ribosomal subunit. Associates with free 30S ribosomal subunits (but not with 30S subunits that are part of 70S ribosomes or polysomes). Required for efficient processing of 16S rRNA. May interact with the 5'-terminal helix region of 16S rRNA. The sequence is that of Ribosome-binding factor A from Haemophilus influenzae (strain 86-028NP).